The sequence spans 84 residues: ATP synthase subunit c (84 aa).

The next 2 membrane-spanning stretches (helical) occupy residues 9–29 (LGLAIFGCAIGMALAALGCGI) and 57–77 (ILGLAFIESLAIYALVINLII).

It belongs to the ATPase C chain family. F-type ATPases have 2 components, F(1) - the catalytic core - and F(0) - the membrane proton channel. F(1) has five subunits: alpha(3), beta(3), gamma(1), delta(1), epsilon(1). F(0) has three main subunits: a(1), b(2) and c(10-14). The alpha and beta chains form an alternating ring which encloses part of the gamma chain. F(1) is attached to F(0) by a central stalk formed by the gamma and epsilon chains, while a peripheral stalk is formed by the delta and b chains.

It localises to the cell membrane. Functionally, f(1)F(0) ATP synthase produces ATP from ADP in the presence of a proton or sodium gradient. F-type ATPases consist of two structural domains, F(1) containing the extramembraneous catalytic core and F(0) containing the membrane proton channel, linked together by a central stalk and a peripheral stalk. During catalysis, ATP synthesis in the catalytic domain of F(1) is coupled via a rotary mechanism of the central stalk subunits to proton translocation. Its function is as follows. Key component of the F(0) channel; it plays a direct role in translocation across the membrane. A homomeric c-ring of between 10-14 subunits forms the central stalk rotor element with the F(1) delta and epsilon subunits. This Lawsonia intracellularis (strain PHE/MN1-00) protein is ATP synthase subunit c.